Here is a 609-residue protein sequence, read N- to C-terminus: Acetyl-coenzyme A carboxylase carboxyl transferase subunits beta/alpha (609 aa).

Positions 1 to 271 (MTLEATAIEA…QTAEFLLTHG (271 aa)) are acetyl-coenzyme A carboxylase carboxyl transferase subunit beta. Residues 39-308 (SWLLCGGCGT…GIPRQAGRPD (270 aa)) enclose the CoA carboxyltransferase N-terminal domain. The tract at residues 39 to 559 (SWLLCGGCGT…REALRGALAD (521 aa)) is carboxyltransferase. Residues C43, C46, C62, and C65 each contribute to the Zn(2+) site. The segment at 43–65 (CGGCGTMLYERRFAREGRVCADC) adopts a C4-type zinc-finger fold. An acetyl-coenzyme A carboxylase carboxyl transferase subunit alpha region spans residues 272-582 (VVDLISPRRE…RARFRQFGVA (311 aa)). Residues 314–559 (DPEQLARRDA…REALRGALAD (246 aa)) form the CoA carboxyltransferase C-terminal domain. Low complexity predominate over residues 582-592 (ATPAPATAPAA). The segment at 582–609 (ATPAPATAPAASDDAHESQTDRSVEATR) is disordered. The segment covering 594 to 609 (DDAHESQTDRSVEATR) has biased composition (basic and acidic residues).

The protein in the N-terminal section; belongs to the AccD/PCCB family. This sequence in the C-terminal section; belongs to the AccA family. Acetyl-CoA carboxylase is a heterotetramer composed of biotin carboxyl carrier protein (AccB), biotin carboxylase (AccC) and two subunits of ACCase subunit beta/alpha. The cofactor is Zn(2+).

It is found in the cytoplasm. The enzyme catalyses N(6)-carboxybiotinyl-L-lysyl-[protein] + acetyl-CoA = N(6)-biotinyl-L-lysyl-[protein] + malonyl-CoA. Its pathway is lipid metabolism; malonyl-CoA biosynthesis; malonyl-CoA from acetyl-CoA: step 1/1. In terms of biological role, component of the acetyl coenzyme A carboxylase (ACC) complex. Biotin carboxylase (BC) catalyzes the carboxylation of biotin on its carrier protein (BCCP) and then the CO(2) group is transferred by the transcarboxylase to acetyl-CoA to form malonyl-CoA. The chain is Acetyl-coenzyme A carboxylase carboxyl transferase subunits beta/alpha (accD) from Frankia alni (strain DSM 45986 / CECT 9034 / ACN14a).